A 204-amino-acid chain; its full sequence is Small ribosomal subunit protein uS4 (204 aa).

The S4 RNA-binding domain maps to 92–157 (RRLDALVLRS…KPLFEVAREG (66 aa)).

It belongs to the universal ribosomal protein uS4 family. In terms of assembly, part of the 30S ribosomal subunit. Contacts protein S5. The interaction surface between S4 and S5 is involved in control of translational fidelity.

Its function is as follows. One of the primary rRNA binding proteins, it binds directly to 16S rRNA where it nucleates assembly of the body of the 30S subunit. In terms of biological role, with S5 and S12 plays an important role in translational accuracy. The polypeptide is Small ribosomal subunit protein uS4 (Streptomyces avermitilis (strain ATCC 31267 / DSM 46492 / JCM 5070 / NBRC 14893 / NCIMB 12804 / NRRL 8165 / MA-4680)).